The sequence spans 235 residues: Nitrile hydratase subunit beta (235 aa).

Belongs to the nitrile hydratase subunit beta family. Heterodimer of an alpha and a beta chain.

It carries out the reaction an aliphatic primary amide = an aliphatic nitrile + H2O. In terms of biological role, NHase catalyzes the hydration of various nitrile compounds to the corresponding amides. The polypeptide is Nitrile hydratase subunit beta (nthB) (Rhodococcus sp).